We begin with the raw amino-acid sequence, 443 residues long: Leucine-rich repeat-containing protein 17 (443 aa).

A signal peptide spans methionine 1–alanine 15. The disordered stretch occupies residues lysine 20–lysine 48. LRR repeat units follow at residues aspartate 84–lysine 105, arginine 108–glycine 129, and lysine 132–tyrosine 153. The region spanning asparagine 165–glutamate 216 is the LRRCT 1 domain. Residues serine 229–proline 270 enclose the LRRNT domain. LRR repeat units follow at residues aspartate 271–aspartate 292, glutamate 295–glycine 316, and histidine 319–tyrosine 342. In terms of domain architecture, LRRCT 2 spans asparagine 352–lysine 404.

Expressed in osteoblasts, spleen, lung and heart.

It localises to the secreted. The protein resides in the extracellular space. Functionally, involved in bone homeostasis. Acts as a negative regulator of RANKL-induced osteoclast precursor differentiation from bone marrow precursors. The protein is Leucine-rich repeat-containing protein 17 (Lrrc17) of Mus musculus (Mouse).